The chain runs to 953 residues: ALS2 C-terminal-like protein (953 aa).

MORN repeat units lie at residues 358–380, 381–403, 409–431, 432–452, 459–479, 483–505, 506–528, and 529–552; these read YEGE…DGRN, HVGN…QASE, YKCH…TDEV, YKGY…SGPQ, YTGH…DGDR, YIGM…AGVC, YQGT…DDSL, and YEGT…NGFT. The VPS9 domain maps to 796-942; sequence LFPDTQLLEF…IQKEDMRLHR (147 aa).

As to quaternary structure, homodimer. Forms a heteromeric complex with ALS2. Interacts with ALS2 and RAB5A. Expressed in heart and kidney.

It localises to the cytoplasm. Its function is as follows. Acts as a guanine nucleotide exchange factor (GEF) for Rab5 GTPase. Regulates the ALS2-mediated endosome dynamics. The polypeptide is ALS2 C-terminal-like protein (ALS2CL) (Homo sapiens (Human)).